A 170-amino-acid polypeptide reads, in one-letter code: Protein SOB FIVE-LIKE 5 (170 aa).

The SOFL-A signature appears at serine 10–tyrosine 15. Residues aspartate 17–serine 78 form a disordered region. The span at aspartate 35–tryptophan 44 shows a compositional bias: basic and acidic residues. The SOFL-B motif lies at serine 61 to proline 70. Positions valine 79–glycine 86 match the Nuclear localization signal motif.

The protein belongs to the SOFL plant protein family. As to expression, expressed in seedlings, roots, flowers and siliques. Barely detectable in leaves.

It localises to the cytoplasm. It is found in the nucleus. Its function is as follows. Involved in cytokinin-mediated development. This Arabidopsis thaliana (Mouse-ear cress) protein is Protein SOB FIVE-LIKE 5.